The chain runs to 188 residues: Elongation factor P-like protein (188 aa).

Belongs to the elongation factor P family.

In Vibrio campbellii (strain ATCC BAA-1116), this protein is Elongation factor P-like protein.